The following is a 151-amino-acid chain: Large ribosomal subunit protein bL9 (151 aa).

The protein belongs to the bacterial ribosomal protein bL9 family.

In terms of biological role, binds to the 23S rRNA. The sequence is that of Large ribosomal subunit protein bL9 from Francisella philomiragia subsp. philomiragia (strain ATCC 25017 / CCUG 19701 / FSC 153 / O#319-036).